Here is a 190-residue protein sequence, read N- to C-terminus: Somatotropin (190 aa).

H19 serves as a coordination point for Zn(2+). C52 and C163 are oxidised to a cystine. Phosphoserine is present on S105. E172 contributes to the Zn(2+) binding site. A disulfide bridge links C180 with C188.

This sequence belongs to the somatotropin/prolactin family.

The protein resides in the secreted. Functionally, plays an important role in growth control. Its major role in stimulating body growth is to stimulate the liver and other tissues to secrete IGF1. It stimulates both the differentiation and proliferation of myoblasts. It also stimulates amino acid uptake and protein synthesis in muscle and other tissues. In Vulpes vulpes (Red fox), this protein is Somatotropin (GH1).